Consider the following 271-residue polypeptide: MATH domain and coiled-coil domain-containing protein At3g27040 (271 aa).

An MATH domain is found at 7–133 (DKKFTWVIKN…NGEVKIVAEV (127 aa)). A coiled-coil region spans residues 230–271 (KLDWLEKKLKETGKSRLQEIEEDLKDLKVKCADMDALLDFLR).

The protein is MATH domain and coiled-coil domain-containing protein At3g27040 of Arabidopsis thaliana (Mouse-ear cress).